Here is a 102-residue protein sequence, read N- to C-terminus: uncharacterized protein (102 aa).

[3Fe-4S] cluster-binding residues include C10, C16, and C55. The segment at 66 to 102 (DAGDDERASADPARSPAEAERHAAKDQRIPGGHDGTV) is disordered. Residues 82–93 (AEAERHAAKDQR) show a composition bias toward basic and acidic residues.

Requires [3Fe-4S] cluster as cofactor.

Functionally, electron transport protein for the cytochrome systems. This is an uncharacterized protein from Sinorhizobium fredii (strain NBRC 101917 / NGR234).